The primary structure comprises 121 residues: Large ribosomal subunit protein bL12 (121 aa).

The protein belongs to the bacterial ribosomal protein bL12 family. In terms of assembly, homodimer. Part of the ribosomal stalk of the 50S ribosomal subunit. Forms a multimeric L10(L12)X complex, where L10 forms an elongated spine to which 2 to 4 L12 dimers bind in a sequential fashion. Binds GTP-bound translation factors.

In terms of biological role, forms part of the ribosomal stalk which helps the ribosome interact with GTP-bound translation factors. Is thus essential for accurate translation. The chain is Large ribosomal subunit protein bL12 from Mesomycoplasma hyopneumoniae (strain 232) (Mycoplasma hyopneumoniae).